The chain runs to 509 residues: Butyrophilin-like protein 1 (509 aa).

The first 27 residues, 1-27, serve as a signal peptide directing secretion; sequence MMKGSPSVPPAGCLLPLLLLLFTGVSG. Ig-like V-type domains are found at residues 28 to 139 and 151 to 237; these read EVSW…QEVS and PLVH…KAIL. Over 28–250 the chain is Extracellular; sequence EVSWFSVKGP…PFFPKTCPWK (223 aa). 2 disulfides stabilise this stretch: C53–C127 and C167–C221. The chain crosses the membrane as a helical span at residues 251–271; that stretch reads VALVCSVLILLVLLGGISLGI. Residues 272–509 lie on the Cytoplasmic side of the membrane; the sequence is WKEHQVKRRE…SMGLSATAQP (238 aa). A B30.2/SPRY domain is found at 316-509; it reads RKALYKEDWK…SMGLSATAQP (194 aa). The segment at 349–372 is disordered; sequence MPDQDKTDSRTEENRGEETVSSSQ. A compositionally biased stretch (basic and acidic residues) spans 351-366; sequence DQDKTDSRTEENRGEE.

This sequence belongs to the immunoglobulin superfamily. BTN/MOG family.

It localises to the membrane. In Mus musculus (Mouse), this protein is Butyrophilin-like protein 1 (Btnl1).